The following is a 931-amino-acid chain: Phosphoenolpyruvate carboxylase (931 aa).

Residues H138 and K594 contribute to the active site.

It belongs to the PEPCase type 1 family. It depends on Mg(2+) as a cofactor.

It catalyses the reaction oxaloacetate + phosphate = phosphoenolpyruvate + hydrogencarbonate. Its function is as follows. Forms oxaloacetate, a four-carbon dicarboxylic acid source for the tricarboxylic acid cycle. The protein is Phosphoenolpyruvate carboxylase of Streptococcus agalactiae serotype III (strain NEM316).